The primary structure comprises 645 residues: MELKTMPHNGANGSPQHNNNNNSNNNNNVSSDTKTDNNEKEAQKKDEGRTNWSNGIEFLMSCISVSVGLGNVWRFPFTAYENGGGAFLIPYIIVLFLIGKPMYYLEMIIGQFTSQGTVKIWSICPSFVGVGYGQAFATICIITYYSSLLALTLYYLFVSFQSELPWSYCRDEWTNCVNSIPTEFVETALGNTTSALAQQANTLSNTTKLQSSSELYFLNVVIKEKSDISDGIGIPDWKLTIALFVSWVVIFLVIMRGVKSSGKAAYFLALFPYVVLFALLGRAVTLEGAVDGIIFFLQPQWGELLNPIVWKEAVVQCFFSLAVGCGPIIMFASYNRFDHGIYRDAMIVTTLDTLTSLLGGITIFAILGNLAHNLKAENIRDVVRSGTGLAFISYPDAISKFQAVPQLFSVLFFFMLFVLGIGSIVALQSTIVTIICDQFKSWKYWKVALATSACGFLMGLVYVTPGGQWILTLVDFYGGTYVVFILAIFELSGIVWIYGLQNFCDDIEFMSNKNVSMYWRLCWSFFTPVMMIVIFIYSMATIQPIKYSDQYFPLAGDVAGWLLFAVGAAQFPLWGWWYIATHRHGSCAESIKASLKPSSKWGPASPENRQAWLLFKSDLAAKRANEAKSNKFGFFQQKLRNMCGK.

The disordered stretch occupies residues 1–48 (MELKTMPHNGANGSPQHNNNNNSNNNNNVSSDTKTDNNEKEAQKKDEG). The Cytoplasmic segment spans residues 1–51 (MELKTMPHNGANGSPQHNNNNNSNNNNNVSSDTKTDNNEKEAQKKDEGRTN). Residues 18-32 (NNNNNSNNNNNVSSD) are compositionally biased toward low complexity. Over residues 33 to 48 (TKTDNNEKEAQKKDEG) the composition is skewed to basic and acidic residues. The next 3 membrane-spanning stretches (helical) occupy residues 52-72 (WSNG…LGNV), 85-105 (GAFL…MYYL), and 138-158 (TICI…YLFV). 2 N-linked (GlcNAc...) asparagine glycosylation sites follow: Asn-191 and Asn-205. 7 helical membrane passes run 234–254 (IPDW…FLVI), 264–284 (AAYF…GRAV), 313–333 (AVVQ…MFAS), 347–367 (IVTT…FAIL), 407–427 (LFSV…IVAL), 454–474 (CGFL…LTLV), and 480–500 (TYVV…IYGL). Asn-514 is a glycosylation site (N-linked (GlcNAc...) asparagine). The next 2 helical transmembrane spans lie at 522–542 (CWSF…MATI) and 559–579 (AGWL…WWYI).

It belongs to the sodium:neurotransmitter symporter (SNF) (TC 2.A.22) family.

It is found in the membrane. Its function is as follows. Unusual broad substrate spectrum amino acid:sodium cotransporter that promotes absorption of the D isomers of essential amino acids. Neutral amino acids are the preferred substrates, especially methionine and phenylalanine. The sequence is that of Sodium-dependent nutrient amino acid transporter 1 from Drosophila mojavensis (Fruit fly).